The sequence spans 78 residues: Cytochrome c oxidase subunit 6b-3 (78 aa).

The CHCH domain maps to 22–65 (TRHCFTRYIEFHRCTTAKGEDANECERFAKYYRALCPGEWVDKW). Positions 25–35 (CFTRYIEFHRC) match the Cx9C motif motif. 2 cysteine pairs are disulfide-bonded: Cys25-Cys57 and Cys35-Cys46. The Cx10C motif signature appears at 46 to 57 (CERFAKYYRALC).

Belongs to the cytochrome c oxidase subunit 6B (TC 3.D.4.8) family. As to expression, expressed in the whole plant.

Its subcellular location is the mitochondrion. Functionally, this protein is one of the nuclear-coded polypeptide chains of cytochrome c oxidase, the terminal oxidase in mitochondrial electron transport. This protein may be one of the heme-binding subunits of the oxidase. The protein is Cytochrome c oxidase subunit 6b-3 (COX6B-3) of Arabidopsis thaliana (Mouse-ear cress).